A 236-amino-acid chain; its full sequence is UPF0502 protein Bcen2424_5610 (236 aa).

The protein belongs to the UPF0502 family.

The chain is UPF0502 protein Bcen2424_5610 from Burkholderia cenocepacia (strain HI2424).